Reading from the N-terminus, the 159-residue chain is 2-C-methyl-D-erythritol 2,4-cyclodiphosphate synthase (159 aa).

2 residues coordinate a divalent metal cation: Asp-10 and His-12. Residues Asp-10 to His-12 and His-36 to Ser-37 each bind 4-CDP-2-C-methyl-D-erythritol 2-phosphate. Position 44 (His-44) interacts with a divalent metal cation. Residues Asp-58 to Gly-60, Phe-63 to Asp-67, and Arg-144 contribute to the 4-CDP-2-C-methyl-D-erythritol 2-phosphate site.

This sequence belongs to the IspF family. As to quaternary structure, homotrimer. The cofactor is a divalent metal cation.

The catalysed reaction is 4-CDP-2-C-methyl-D-erythritol 2-phosphate = 2-C-methyl-D-erythritol 2,4-cyclic diphosphate + CMP. The protein operates within isoprenoid biosynthesis; isopentenyl diphosphate biosynthesis via DXP pathway; isopentenyl diphosphate from 1-deoxy-D-xylulose 5-phosphate: step 4/6. In terms of biological role, involved in the biosynthesis of isopentenyl diphosphate (IPP) and dimethylallyl diphosphate (DMAPP), two major building blocks of isoprenoid compounds. Catalyzes the conversion of 4-diphosphocytidyl-2-C-methyl-D-erythritol 2-phosphate (CDP-ME2P) to 2-C-methyl-D-erythritol 2,4-cyclodiphosphate (ME-CPP) with a corresponding release of cytidine 5-monophosphate (CMP). This chain is 2-C-methyl-D-erythritol 2,4-cyclodiphosphate synthase, found in Paraburkholderia phytofirmans (strain DSM 17436 / LMG 22146 / PsJN) (Burkholderia phytofirmans).